Consider the following 417-residue polypeptide: Putative F-box protein At3g58950 (417 aa).

An F-box domain is found at 1-53; sequence MDLFSSLPDEVLCHILSFLTTKEAALASVVSKRWRNQFALVPNLDIDEEGKRE.

The protein is Putative F-box protein At3g58950 of Arabidopsis thaliana (Mouse-ear cress).